Here is a 68-residue protein sequence, read N- to C-terminus: Small ribosomal subunit protein bS21 (68 aa).

A disordered region spans residues 39–68; sequence PPSVKRVRKKQESERRHRKERAMRRRMMEE. The span at 54 to 68 shows a compositional bias: basic residues; that stretch reads RHRKERAMRRRMMEE.

Belongs to the bacterial ribosomal protein bS21 family.

This is Small ribosomal subunit protein bS21 from Orientia tsutsugamushi (strain Ikeda) (Rickettsia tsutsugamushi).